Reading from the N-terminus, the 146-residue chain is Large ribosomal subunit protein uL15 (146 aa).

The segment at 1 to 61 is disordered; it reads MELNSLKPAA…GGQMPMHRRL (61 aa). Over residues 30-39 the composition is skewed to basic residues; the sequence is TATKGHKGQK.

This sequence belongs to the universal ribosomal protein uL15 family. As to quaternary structure, part of the 50S ribosomal subunit.

Its function is as follows. Binds to the 23S rRNA. This is Large ribosomal subunit protein uL15 from Geotalea uraniireducens (strain Rf4) (Geobacter uraniireducens).